Here is a 183-residue protein sequence, read N- to C-terminus: NAD(P)H-quinone oxidoreductase subunit I, chloroplastic (183 aa).

4Fe-4S ferredoxin-type domains are found at residues 55–84 and 95–124; these read GRIH…VDWE and KNYS…MTEE. Residues Cys-64, Cys-67, Cys-70, Cys-74, Cys-104, Cys-107, Cys-110, and Cys-114 each contribute to the [4Fe-4S] cluster site.

It belongs to the complex I 23 kDa subunit family. As to quaternary structure, NDH is composed of at least 16 different subunits, 5 of which are encoded in the nucleus. Requires [4Fe-4S] cluster as cofactor.

It is found in the plastid. The protein localises to the chloroplast thylakoid membrane. The catalysed reaction is a plastoquinone + NADH + (n+1) H(+)(in) = a plastoquinol + NAD(+) + n H(+)(out). It catalyses the reaction a plastoquinone + NADPH + (n+1) H(+)(in) = a plastoquinol + NADP(+) + n H(+)(out). Its function is as follows. NDH shuttles electrons from NAD(P)H:plastoquinone, via FMN and iron-sulfur (Fe-S) centers, to quinones in the photosynthetic chain and possibly in a chloroplast respiratory chain. The immediate electron acceptor for the enzyme in this species is believed to be plastoquinone. Couples the redox reaction to proton translocation, and thus conserves the redox energy in a proton gradient. This Marchantia polymorpha (Common liverwort) protein is NAD(P)H-quinone oxidoreductase subunit I, chloroplastic.